The sequence spans 114 residues: UPF0342 protein SSP0954 (114 aa).

The protein belongs to the UPF0342 family.

This Staphylococcus saprophyticus subsp. saprophyticus (strain ATCC 15305 / DSM 20229 / NCIMB 8711 / NCTC 7292 / S-41) protein is UPF0342 protein SSP0954.